Consider the following 424-residue polypeptide: Enolase (424 aa).

Residue Q164 participates in (2R)-2-phosphoglycerate binding. The Proton donor role is filled by E206. D243, E284, and D311 together coordinate Mg(2+). (2R)-2-phosphoglycerate is bound by residues K336, R365, S366, and K387. Catalysis depends on K336, which acts as the Proton acceptor.

The protein belongs to the enolase family. It depends on Mg(2+) as a cofactor.

It is found in the cytoplasm. It localises to the secreted. The protein resides in the cell surface. The enzyme catalyses (2R)-2-phosphoglycerate = phosphoenolpyruvate + H2O. Its pathway is carbohydrate degradation; glycolysis; pyruvate from D-glyceraldehyde 3-phosphate: step 4/5. Its function is as follows. Catalyzes the reversible conversion of 2-phosphoglycerate (2-PG) into phosphoenolpyruvate (PEP). It is essential for the degradation of carbohydrates via glycolysis. In Wolbachia sp. subsp. Drosophila simulans (strain wRi), this protein is Enolase.